The sequence spans 600 residues: Glutamine--fructose-6-phosphate aminotransferase [isomerizing] (600 aa).

Residue cysteine 2 is the Nucleophile; for GATase activity of the active site. The Glutamine amidotransferase type-2 domain maps to 2-217; the sequence is CGIVGYIGTE…DEEIVIVTKD (216 aa). SIS domains follow at residues 283-422 and 452-590; these read IRQA…AKGI and IARD…VDKP. Lysine 595 serves as the catalytic For Fru-6P isomerization activity.

As to quaternary structure, homodimer.

It is found in the cytoplasm. It carries out the reaction D-fructose 6-phosphate + L-glutamine = D-glucosamine 6-phosphate + L-glutamate. In terms of biological role, catalyzes the first step in hexosamine metabolism, converting fructose-6P into glucosamine-6P using glutamine as a nitrogen source. The sequence is that of Glutamine--fructose-6-phosphate aminotransferase [isomerizing] from Halalkalibacterium halodurans (strain ATCC BAA-125 / DSM 18197 / FERM 7344 / JCM 9153 / C-125) (Bacillus halodurans).